Here is a 141-residue protein sequence, read N- to C-terminus: Large ribosomal subunit protein uL11 (141 aa).

It belongs to the universal ribosomal protein uL11 family. Part of the ribosomal stalk of the 50S ribosomal subunit. Interacts with L10 and the large rRNA to form the base of the stalk. L10 forms an elongated spine to which L12 dimers bind in a sequential fashion forming a multimeric L10(L12)X complex. Post-translationally, one or more lysine residues are methylated.

Its function is as follows. Forms part of the ribosomal stalk which helps the ribosome interact with GTP-bound translation factors. The chain is Large ribosomal subunit protein uL11 from Pseudothermotoga lettingae (strain ATCC BAA-301 / DSM 14385 / NBRC 107922 / TMO) (Thermotoga lettingae).